Reading from the N-terminus, the 326-residue chain is Phospholipid scramblase 4 (326 aa).

The segment at 1-32 (MSGLVPTAPEQPTEEMENQIKSPTAVPDAPPD) is disordered. Residues 1 to 94 (MSGLVPTAPE…PVTNQPAPIM (94 aa)) form a proline-rich domain (PRD) region. At 1–299 (MSGLVPTAPE…IRFPLALDVK (299 aa)) the chain is on the cytoplasmic side. The SH3-binding 1 signature appears at 18–25 (NQIKSPTA). A PPxY motif motif is present at residues 30-33 (PPDY). The short motif at 41 to 49 (PAGPVASPS) is the SH3-binding 2 element. Tyr-79 and Tyr-84 each carry phosphotyrosine; by ABL. Residues 94 to 102 (MWMAGPAPV) carry the SH3-binding 3 motif. Residues Cys-193, Cys-194, Cys-195, Cys-197, and Cys-198 are each lipidated (S-palmitoyl cysteine). The chain crosses the membrane as a helical span at residues 300-316 (MKAMIFGSCFLIDFMYF). The Extracellular portion of the chain corresponds to 317–326 (ERPPPRRMSR).

Belongs to the phospholipid scramblase family. In terms of assembly, interacts with PDCD6. Interacts with KPNA2; this interaction mediates the nucleus import of PLSCR4. It depends on Ca(2+) as a cofactor. The cofactor is Mg(2+). Zn(2+) is required as a cofactor.

It is found in the cell membrane. The protein localises to the nucleus. The catalysed reaction is a 1,2-diacyl-sn-glycero-3-phosphocholine(in) = a 1,2-diacyl-sn-glycero-3-phosphocholine(out). The enzyme catalyses a 1,2-diacyl-sn-glycero-3-phospho-L-serine(in) = a 1,2-diacyl-sn-glycero-3-phospho-L-serine(out). Catalyzes metal ion-induced ATP-independent rapid bidirectional and non-specific movement of phospholipids (lipid scrambling or lipid flip-flop) between the inner and outer leaflet of the plasma membrane and participates in the redistribution of phospholipids between membrane leaflets. Metal ions bind to the calcium-binding site and induce conformation change in the protein. Has a greater affi nity for Ca(2+) than Mg(2+) and Zn(2+). The chain is Phospholipid scramblase 4 from Mus musculus (Mouse).